Here is a 44-residue protein sequence, read N- to C-terminus: Large ribosomal subunit protein bL34 (44 aa).

The protein belongs to the bacterial ribosomal protein bL34 family.

This chain is Large ribosomal subunit protein bL34, found in Variovorax paradoxus (strain S110).